We begin with the raw amino-acid sequence, 323 residues long: Arginase (323 aa).

Mn(2+)-binding residues include His-119, Asp-142, His-144, and Asp-146. Substrate-binding positions include 144–148 (HADIN), 155–157 (SKN), and Asp-198. Mn(2+) contacts are provided by Asp-247 and Asp-249. Substrate contacts are provided by Thr-261 and Glu-292.

The protein belongs to the arginase family. As to quaternary structure, homotrimer. The cofactor is Mn(2+).

The catalysed reaction is L-arginine + H2O = urea + L-ornithine. Its pathway is nitrogen metabolism; urea cycle; L-ornithine and urea from L-arginine: step 1/1. The polypeptide is Arginase (aru1) (Schizosaccharomyces pombe (strain 972 / ATCC 24843) (Fission yeast)).